Reading from the N-terminus, the 216-residue chain is Gas vesicle protein H (216 aa).

Positions 1–141 are disordered; the sequence is MSPNLNGPGG…IHIETRETDD (141 aa). Over residues 15–25 the composition is skewed to acidic residues; that stretch reads DRPDEPDDSDR. Basic and acidic residues-rich tracts occupy residues 38-51, 73-84, and 107-141; these read PDDR…RPSD, DGHRQGHGRIDR, and KPSD…ETDD.

Belongs to the gas vesicle GvpH family. In terms of assembly, gvpF to GvpM interact with each other in vitro, and may form multi-subunit complex(es). Interacts with GvpC. Might interact with GvpA.

The protein resides in the gas vesicle. Its function is as follows. Proteins GvpF to GvpM might be involved in nucleating gas vesicle formation. A minor component of the gas vesicle. Gas vesicles are hollow, gas filled proteinaceous nanostructures found in some microorganisms. They allow positioning of halobacteria at the optimal depth for growth in the poorly aerated, shallow brine pools of their habitat. In terms of biological role, expression of a 9.5 kb mc-vac DNA fragment containing 2 divergently transcribed regions (gvpD-gvpE-gvpF-gvpG-gvpH-gvpI-gvpJ-gvpK-gvpL-gvpM and gvpA-gvpC-gvpN-gvpO) allows H.volcanii to produce gas vesicles. This is Gas vesicle protein H from Haloferax mediterranei (strain ATCC 33500 / DSM 1411 / JCM 8866 / NBRC 14739 / NCIMB 2177 / R-4) (Halobacterium mediterranei).